The chain runs to 238 residues: MORN repeat-containing protein 3 (238 aa).

MORN repeat units follow at residues 38–60, 62–84, 91–113, 114–136, 137–159, 160–182, and 184–205; these read YTGE…RRKS, YEGD…DSNT, YSGY…AKEY, YEGE…NGDI, YEGE…NENR, YEGS…NKGQ, and YEGV…GRTE.

The protein resides in the cytoplasmic vesicle. It is found in the secretory vesicle. It localises to the acrosome. Its function is as follows. Assembles a suppression complex (suppresome) by tethering SIRT1 and MDM2 to regulate composite modifications of p53/TP53. Confers both deacetylation-mediated functional inactivation, by SIRT1, and ubiquitination-dependent degradation, by MDM2, of p53/TP53, promoting a proliferative and cell survival behaviors. May play a role in the regulation of spermatogenesis. This is MORN repeat-containing protein 3 (morn3) from Xenopus laevis (African clawed frog).